The primary structure comprises 1014 residues: C2 domain-containing protein 5 (1014 aa).

Residues 1-109 (MPGKLKVKIV…EAATVISGWF (109 aa)) enclose the C2 domain. Ca(2+)-binding residues include Asp19, Asp26, Asp76, Asp78, Ser81, and Asp84. 4 disordered regions span residues 274-328 (LNPN…GRDG), 639-669 (ETVG…AELD), 801-878 (ALQV…HRGG), and 992-1014 (EAGP…DSAT). The segment covering 275 to 292 (NPNTHSSGPSTPLKNQTY) has biased composition (polar residues). The segment covering 293 to 318 (SFSPSKSFSRQSSSSDTDLSLTPKTG) has biased composition (low complexity). Over residues 319–328 (MGSGSAGRDG) the composition is skewed to gly residues. A compositionally biased stretch (polar residues) spans 830-840 (SSDSPGPSTFS). Over residues 993-1006 (AGPGQPTAPGPQSA) the composition is skewed to low complexity.

It depends on Ca(2+) as a cofactor.

Its subcellular location is the cytoplasmic vesicle membrane. It localises to the cytoplasm. It is found in the cell cortex. The protein resides in the cell membrane. The protein localises to the cell projection. Its subcellular location is the ruffle. Its function is as follows. May be required for insulin-stimulated glucose transport and glucose transporter SLC2A4/GLUT4 translocation from intracellular glucose storage vesicle (GSV) to the plasma membrane (PM) in adipocytes. May bind phospholipid membranes in a calcium-dependent manner. This is C2 domain-containing protein 5 (c2cd5) from Xenopus tropicalis (Western clawed frog).